We begin with the raw amino-acid sequence, 676 residues long: DNA ligase (676 aa).

Residues 35-39 (DAEYD), 84-85 (SL), and Glu-118 each bind NAD(+). The active-site N6-AMP-lysine intermediate is Lys-120. NAD(+)-binding residues include Arg-141, Glu-176, Lys-284, and Lys-308. Residues Cys-402, Cys-405, Cys-420, and Cys-426 each coordinate Zn(2+). The 82-residue stretch at 595-676 (SYLSLIHGKI…WLQYTQSSEN (82 aa)) folds into the BRCT domain.

The protein belongs to the NAD-dependent DNA ligase family. LigA subfamily. Mg(2+) is required as a cofactor. Mn(2+) serves as cofactor.

It carries out the reaction NAD(+) + (deoxyribonucleotide)n-3'-hydroxyl + 5'-phospho-(deoxyribonucleotide)m = (deoxyribonucleotide)n+m + AMP + beta-nicotinamide D-nucleotide.. In terms of biological role, DNA ligase that catalyzes the formation of phosphodiester linkages between 5'-phosphoryl and 3'-hydroxyl groups in double-stranded DNA using NAD as a coenzyme and as the energy source for the reaction. It is essential for DNA replication and repair of damaged DNA. The protein is DNA ligase of Ehrlichia chaffeensis (strain ATCC CRL-10679 / Arkansas).